The chain runs to 99 residues: Aspartyl/glutamyl-tRNA(Asn/Gln) amidotransferase subunit C (99 aa).

It belongs to the GatC family. As to quaternary structure, heterotrimer of A, B and C subunits.

It carries out the reaction L-glutamyl-tRNA(Gln) + L-glutamine + ATP + H2O = L-glutaminyl-tRNA(Gln) + L-glutamate + ADP + phosphate + H(+). The enzyme catalyses L-aspartyl-tRNA(Asn) + L-glutamine + ATP + H2O = L-asparaginyl-tRNA(Asn) + L-glutamate + ADP + phosphate + 2 H(+). Allows the formation of correctly charged Asn-tRNA(Asn) or Gln-tRNA(Gln) through the transamidation of misacylated Asp-tRNA(Asn) or Glu-tRNA(Gln) in organisms which lack either or both of asparaginyl-tRNA or glutaminyl-tRNA synthetases. The reaction takes place in the presence of glutamine and ATP through an activated phospho-Asp-tRNA(Asn) or phospho-Glu-tRNA(Gln). The polypeptide is Aspartyl/glutamyl-tRNA(Asn/Gln) amidotransferase subunit C (Delftia acidovorans (strain DSM 14801 / SPH-1)).